The sequence spans 318 residues: Deoxymugineic acid synthase 1 (318 aa).

Asp48 contacts NADP(+). The active-site Proton donor is the Tyr53. Position 116 (His116) interacts with substrate. Residues 162 to 163, Gln184, 262 to 270, and 277 to 285 contribute to the NADP(+) site; these read CN, FDEARMREN, and ELTEEERQR.

Belongs to the aldo/keto reductase family. In terms of tissue distribution, confined to cells participating in long distance transport (e.g. in the parts of pericycle cells adjacent to the protoxylem and metaxylem) in roots and to vascular bundles in shoots.

It catalyses the reaction 2'-deoxymugineate + NAD(+) = 3''-deamino-3''-oxonicotianamine + NADH + H(+). The catalysed reaction is 2'-deoxymugineate + NADP(+) = 3''-deamino-3''-oxonicotianamine + NADPH + H(+). Its pathway is siderophore biosynthesis. Catalyzes the reduction of a 3''-keto intermediate during the biosynthesis of 2'-deoxymugineic acid (DMA) from L-Met. Involved in the formation of phytosiderophores (MAs) belonging to the mugineic acid family and required to acquire iron. The chain is Deoxymugineic acid synthase 1 from Oryza sativa subsp. japonica (Rice).